The chain runs to 160 residues: Cytochrome b6-f complex subunit 4 (160 aa).

3 helical membrane passes run 36 to 56 (LLYV…ALAV), 95 to 115 (LLGV…PFIE), and 131 to 151 (TVFL…ALPL).

This sequence belongs to the cytochrome b family. PetD subfamily. As to quaternary structure, the 4 large subunits of the cytochrome b6-f complex are cytochrome b6, subunit IV (17 kDa polypeptide, PetD), cytochrome f and the Rieske protein, while the 4 small subunits are PetG, PetL, PetM and PetN. The complex functions as a dimer.

It is found in the cellular thylakoid membrane. Its function is as follows. Component of the cytochrome b6-f complex, which mediates electron transfer between photosystem II (PSII) and photosystem I (PSI), cyclic electron flow around PSI, and state transitions. The chain is Cytochrome b6-f complex subunit 4 from Trichormus variabilis (strain ATCC 29413 / PCC 7937) (Anabaena variabilis).